A 153-amino-acid polypeptide reads, in one-letter code: Endoribonuclease YbeY (153 aa).

Residues histidine 114, histidine 118, and histidine 124 each contribute to the Zn(2+) site.

This sequence belongs to the endoribonuclease YbeY family. The cofactor is Zn(2+).

The protein localises to the cytoplasm. Functionally, single strand-specific metallo-endoribonuclease involved in late-stage 70S ribosome quality control and in maturation of the 3' terminus of the 16S rRNA. The chain is Endoribonuclease YbeY from Shewanella amazonensis (strain ATCC BAA-1098 / SB2B).